Reading from the N-terminus, the 207-residue chain is Large ribosomal subunit protein uL4 (207 aa).

Residues 49–78 form a disordered region; sequence HAVKNRSAVSGGGRKPWRQKGTGRARQGSI.

It belongs to the universal ribosomal protein uL4 family. Part of the 50S ribosomal subunit.

In terms of biological role, one of the primary rRNA binding proteins, this protein initially binds near the 5'-end of the 23S rRNA. It is important during the early stages of 50S assembly. It makes multiple contacts with different domains of the 23S rRNA in the assembled 50S subunit and ribosome. Forms part of the polypeptide exit tunnel. The polypeptide is Large ribosomal subunit protein uL4 (Streptococcus thermophilus (strain CNRZ 1066)).